The primary structure comprises 128 residues: Small ribosomal subunit protein uS11 (128 aa).

This sequence belongs to the universal ribosomal protein uS11 family. Part of the 30S ribosomal subunit. Interacts with proteins S7 and S18. Binds to IF-3.

In terms of biological role, located on the platform of the 30S subunit, it bridges several disparate RNA helices of the 16S rRNA. Forms part of the Shine-Dalgarno cleft in the 70S ribosome. This Ligilactobacillus salivarius (strain UCC118) (Lactobacillus salivarius) protein is Small ribosomal subunit protein uS11.